The chain runs to 464 residues: Secretion-regulating guanine nucleotide exchange factor (464 aa).

RCC1 repeat units lie at residues 15–67 (AVLF…VTDG), 68–119 (GDLF…LTEK), 120–171 (GQVL…TTAT), 172–230 (GSVF…LTDT), 231–283 (GELY…KTET), 284–351 (GKVF…VIRD), and 352–402 (KCCS…LAVC). The segment at 422–464 (DDTENTESQGAVDRDRLEGETISDLNPDRTRNGGGGCESETVQ) is disordered. Phosphoserine is present on Ser429.

As to quaternary structure, interacts with SEC5. The interaction occurs only in the presence of magnesium or manganese and is stimulated by dCTP or GTP.

The protein resides in the cytoplasm. Its subcellular location is the nucleus. Its function is as follows. Probable guanine nucleotide exchange factor (GEF), which may be involved in the secretion process. This chain is Secretion-regulating guanine nucleotide exchange factor (Sergef), found in Mus musculus (Mouse).